Reading from the N-terminus, the 672-residue chain is Spermatid perinuclear RNA-binding protein (672 aa).

One can recognise a DZF domain in the interval 5 to 363 (RSFANDDRHV…ALKRPFEDGL (359 aa)). Disordered regions lie at residues 52-73 (TNKG…GENY) and 349-371 (GAGS…DPNK). Residues 357–371 (RPFEDGLGDDKDPNK) show a composition bias toward basic and acidic residues. A DRBM 1 domain is found at 387–453 (DLMNALMRLN…AVKVLQAMGY (67 aa)). Residues 466–476 (SDEKSDNESKN) are compositionally biased toward basic and acidic residues. A disordered region spans residues 466-499 (SDEKSDNESKNETVSSNSSNNTGNSTTETSSTLE). Low complexity predominate over residues 477–497 (ETVSSNSSNNTGNSTTETSST). The 67-residue stretch at 510–576 (SGKNPVMELN…ALAALEKLFS (67 aa)) folds into the DRBM 2 domain. 2 positions are modified to asymmetric dimethylarginine: Arg-612 and Arg-617.

As to quaternary structure, interacts with EIF2AK2. Associates with microtubules; it is unsure whether such interaction is direct or indirect.

The protein localises to the cytoplasm. Its function is as follows. Involved in spermatogenesis and sperm function. Plays a role in regulation of cell growth. Binds to double-stranded DNA and RNA. Binds most efficiently to poly(I:C) RNA than to poly(dI:dC) DNA. Binds also to single-stranded poly(G) RNA. Binds non-specifically to the mRNA PRM1 3'-UTR and adenovirus VA RNA. The protein is Spermatid perinuclear RNA-binding protein (STRBP) of Homo sapiens (Human).